Consider the following 194-residue polypeptide: Interleukin-18 (194 aa).

The propeptide occupies 1-36; the sequence is MAAMSEEGSCVNFKEMMFIDNTLYLIPEDNGDLESD.

It belongs to the IL-1 family. Forms a ternary complex with ligand-binding receptor subunit IL18R1 and signaling receptor subunit IL18RAP at the plasma membrane. Mature IL18 first binds to IL18R1 forming a low affinity binary complex, which then interacts with IL18RAP to form a high affinity ternary complex that signals inside the cell. Interacts with cargo receptor TMED10; the interaction mediates the translocation from the cytoplasm into the ERGIC (endoplasmic reticulum-Golgi intermediate compartment) and thereby secretion. The pro-IL-18 precursor is processed by CASP1 to yield its mature, active form. The pro-IL-18 precursor is however not processed by Casp4/Casp11 in rodents. The pro-IL-18 precursor features autoinhibitory interactions between the propeptide and the post-cleavage-site region, preventing recognition by the IL18R1 receptor. Processing by CASP1 induces conformational changes to generate critical receptor-binding sites. The mature form is then secreted and released in the extracellular milieu by passing through the gasdermin-D (GSDMD) pore. In contrast, cleavage by CASP3 inactivates IL18.

It localises to the cytoplasm. It is found in the cytosol. The protein localises to the secreted. In terms of biological role, pro-inflammatory cytokine primarily involved in epithelial barrier repair, polarized T-helper 1 (Th1) cell and natural killer (NK) cell immune responses. Upon binding to IL18R1 and IL18RAP, forms a signaling ternary complex which activates NF-kappa-B, triggering synthesis of inflammatory mediators. Synergizes with IL12/interleukin-12 to induce IFNG synthesis from T-helper 1 (Th1) cells and natural killer (NK) cells. Involved in transduction of inflammation downstream of pyroptosis: its mature form is specifically released in the extracellular milieu by passing through the gasdermin-D (GSDMD) pore. This chain is Interleukin-18 (Il18), found in Rattus norvegicus (Rat).